Here is a 91-residue protein sequence, read N- to C-terminus: DNA-directed RNA polymerase subunit omega (91 aa).

It belongs to the RNA polymerase subunit omega family. The RNAP catalytic core consists of 2 alpha, 1 beta, 1 beta' and 1 omega subunit. When a sigma factor is associated with the core the holoenzyme is formed, which can initiate transcription.

The catalysed reaction is RNA(n) + a ribonucleoside 5'-triphosphate = RNA(n+1) + diphosphate. Functionally, promotes RNA polymerase assembly. Latches the N- and C-terminal regions of the beta' subunit thereby facilitating its interaction with the beta and alpha subunits. The polypeptide is DNA-directed RNA polymerase subunit omega (Actinobacillus pleuropneumoniae serotype 5b (strain L20)).